A 605-amino-acid chain; its full sequence is ABC transporter E family member 2 (605 aa).

Residues 46-75 form the 4Fe-4S ferredoxin-type domain; sequence KLAFISEELCIGCGICVKKCPFEAIQIINL. ABC transporter domains are found at residues 70–315 and 344–568; these read IQII…FLAG and IQSY…LSHL. ATP is bound by residues 110 to 117 and 381 to 388; these read GTNGIGKS and GENGTGKT.

Belongs to the ABC transporter superfamily. ABCE family. As to expression, expressed in roots, stems, leaves, flowers and siliques.

Its subcellular location is the membrane. The protein is ABC transporter E family member 2 (ABCE2) of Arabidopsis thaliana (Mouse-ear cress).